Reading from the N-terminus, the 146-residue chain is NADH-quinone oxidoreductase subunit A (146 aa).

The next 3 helical transmembrane spans lie at 14-34 (FALF…GGFL), 68-88 (LVAM…AWAV), and 96-116 (IGFI…IYLV).

Belongs to the complex I subunit 3 family. In terms of assembly, NDH-1 is composed of 13 different subunits. Subunits NuoA, H, J, K, L, M, N constitute the membrane sector of the complex.

It localises to the cell inner membrane. The enzyme catalyses a quinone + NADH + 5 H(+)(in) = a quinol + NAD(+) + 4 H(+)(out). NDH-1 shuttles electrons from NADH, via FMN and iron-sulfur (Fe-S) centers, to quinones in the respiratory chain. The immediate electron acceptor for the enzyme in this species is believed to be ubiquinone. Couples the redox reaction to proton translocation (for every two electrons transferred, four hydrogen ions are translocated across the cytoplasmic membrane), and thus conserves the redox energy in a proton gradient. The chain is NADH-quinone oxidoreductase subunit A from Pectobacterium atrosepticum (strain SCRI 1043 / ATCC BAA-672) (Erwinia carotovora subsp. atroseptica).